Here is a 452-residue protein sequence, read N- to C-terminus: Tylactone mycaminosyltransferase (452 aa).

Basic and acidic residues predominate over residues M1–E16. The tract at residues M1–P20 is disordered.

The protein belongs to the glycosyltransferase 28 family.

It catalyses the reaction tylactone + dTDP-alpha-D-mycaminose = 5-O-beta-D-mycaminosyltylactone + dTDP + H(+). Its pathway is antibiotic biosynthesis; tylosin biosynthesis. The activity of TylM2 is substantially increased by the addition of the accessory protein TylM3. Its function is as follows. Involved in the biosynthesis of the macrolide antibiotic tylosin derived from the polyketide lactone tylactone. Catalyzes the transfer of alpha-D-mycaminosyl from dTDP-alpha-D-mycaminose to the 5-hydroxyl group of tylactone to yield 5-O-mycaminosytylactone. It can also accept 16-membered tylactone and 12-membered ring macrolide. The sequence is that of Tylactone mycaminosyltransferase from Streptomyces fradiae (Streptomyces roseoflavus).